The chain runs to 419 residues: Tyrosine--tRNA ligase (419 aa).

Residue tyrosine 34 participates in L-tyrosine binding. The 'HIGH' region motif lies at 39–48 (PTADSLHLGH). Residues tyrosine 169 and glutamine 173 each coordinate L-tyrosine. The short motif at 229-233 (KFGKS) is the 'KMSKS' region element. Lysine 232 is an ATP binding site. Residues 352-419 (LNIIDLLVTS…KKKYFVLNFK (68 aa)) enclose the S4 RNA-binding domain.

This sequence belongs to the class-I aminoacyl-tRNA synthetase family. TyrS type 1 subfamily. In terms of assembly, homodimer.

The protein localises to the cytoplasm. The enzyme catalyses tRNA(Tyr) + L-tyrosine + ATP = L-tyrosyl-tRNA(Tyr) + AMP + diphosphate + H(+). Its function is as follows. Catalyzes the attachment of tyrosine to tRNA(Tyr) in a two-step reaction: tyrosine is first activated by ATP to form Tyr-AMP and then transferred to the acceptor end of tRNA(Tyr). The polypeptide is Tyrosine--tRNA ligase (Streptococcus agalactiae serotype V (strain ATCC BAA-611 / 2603 V/R)).